A 269-amino-acid polypeptide reads, in one-letter code: Ribosomal RNA small subunit methyltransferase A (269 aa).

S-adenosyl-L-methionine contacts are provided by His-12, Leu-14, Gly-39, Glu-60, Asp-81, and Asn-103.

This sequence belongs to the class I-like SAM-binding methyltransferase superfamily. rRNA adenine N(6)-methyltransferase family. RsmA subfamily.

It localises to the cytoplasm. The catalysed reaction is adenosine(1518)/adenosine(1519) in 16S rRNA + 4 S-adenosyl-L-methionine = N(6)-dimethyladenosine(1518)/N(6)-dimethyladenosine(1519) in 16S rRNA + 4 S-adenosyl-L-homocysteine + 4 H(+). In terms of biological role, specifically dimethylates two adjacent adenosines (A1518 and A1519) in the loop of a conserved hairpin near the 3'-end of 16S rRNA in the 30S particle. May play a critical role in biogenesis of 30S subunits. This chain is Ribosomal RNA small subunit methyltransferase A, found in Leptothrix cholodnii (strain ATCC 51168 / LMG 8142 / SP-6) (Leptothrix discophora (strain SP-6)).